The chain runs to 237 residues: Flagellar L-ring protein (237 aa).

Residues 1 to 16 (MIKRSAVVLMAVILTG) form the signal peptide. Cysteine 17 carries N-palmitoyl cysteine lipidation. Residue cysteine 17 is the site of S-diacylglycerol cysteine attachment. Positions 122 to 143 (PPDSSGDMSTDSNSSSDGKGSV) are disordered. Residues 124-140 (DSSGDMSTDSNSSSDGK) show a composition bias toward low complexity.

This sequence belongs to the FlgH family. The basal body constitutes a major portion of the flagellar organelle and consists of four rings (L,P,S, and M) mounted on a central rod.

The protein localises to the cell outer membrane. It localises to the bacterial flagellum basal body. In terms of biological role, assembles around the rod to form the L-ring and probably protects the motor/basal body from shearing forces during rotation. In Allorhizobium ampelinum (strain ATCC BAA-846 / DSM 112012 / S4) (Agrobacterium vitis (strain S4)), this protein is Flagellar L-ring protein.